A 412-amino-acid polypeptide reads, in one-letter code: Phospholipase A1-IIdelta (412 aa).

Alanine 2 carries the N-acetylalanine modification. Serine 238 functions as the Acyl-ester intermediate in the catalytic mechanism. Residues serine 238, aspartate 297, and histidine 336 each act as charge relay system in the active site.

This sequence belongs to the AB hydrolase superfamily. Lipase family. As to expression, expressed in leaves, stems, flowers and siliques, and, at low levels, in seeds and roots (at protein level).

It is found in the cytoplasm. Functionally, acylhydrolase that catalyzes the hydrolysis of phosphatidylcholine (PC) at the sn-1 position. High activity toward PC, medium activity toward monogalactosyldiacylglycerol (MGDG) and low activity toward triacylglycerol (TAG). Confers sensitivity to UV-B radiation probably by deesterifying membrane phospholipids. This is Phospholipase A1-IIdelta from Arabidopsis thaliana (Mouse-ear cress).